A 297-amino-acid polypeptide reads, in one-letter code: MPLPADPSPTLSAYAHPERLVTADWLSAHMGAPGLAIVESDEDVLLYDVGHIPGAVKIDWHTDLNDPRVRDYINGEQFAELMDRKGIARDDTVVIYGDKSNWWAAYALWVFTLFGHADVRLLNGGRDLWLAERRETTLDVPTKTCTGYPVVQRNDAPIRAFRDDVLAILDAQPLIDVRSPEEYTGKRTHMPDYPEEGALRAGHIPTAVHIPWGKAADESGRFRSREELERLYDFINPDDQTVVYCRIGERSSHTWFVLTHLLGKADVRNYDGSWTEWGNAVRVPIVAGEEPGVVPVV.

Rhodanese domains are found at residues 31–138 (GAPG…ETTL) and 168–286 (ILDA…VPIV). The active-site Cysteine persulfide intermediate is Cys245. Arg250 serves as a coordination point for substrate.

It catalyses the reaction thiosulfate + hydrogen cyanide = thiocyanate + sulfite + 2 H(+). The sequence is that of Putative thiosulfate sulfurtransferase SseA (sseA) from Mycobacterium bovis (strain ATCC BAA-935 / AF2122/97).